A 112-amino-acid polypeptide reads, in one-letter code: Citrate synthase (112 aa).

Residues H39 and D97 contribute to the active site.

It belongs to the citrate synthase family.

It catalyses the reaction oxaloacetate + acetyl-CoA + H2O = citrate + CoA + H(+). The protein operates within carbohydrate metabolism; tricarboxylic acid cycle; isocitrate from oxaloacetate: step 1/2. In Bartonella vinsonii subsp. berkhoffii, this protein is Citrate synthase (gltA).